The following is an 807-amino-acid chain: MPKHDSLWLKSLRWIQKHLVHTIVVPQDPFADLNLDASRPLAYVMKTESLSDIAALSEITAKLGLPSPYEPLVANGVIAPRVVCLQGRKPLFGERAGNEPFLECFMRLLAVHKERPELDIQLVPVSLYWGRTPGKEDDTMKAAVFERENPTWLRKCLMILFLGRHNFVQFSNAVSLRYMADEHGTDMGIAHKLARVARVHFRRQRKVMTGPVLPNRQALFHSLLKSESLRKAIQEEAANKKISETQARETAIEYLDEIAADYSDSLVRIAERFLTWLWNKLYSGINIKGAEQVRQLHHDGHEIVYVPCHRSHMDYLLLSYILYYQGMVPPHIAAGINLNFWPAGPMFRRGGAFFIRRSFNGNKLYTAVFREYLDQLFAKGYSVEYFSEGGRSRTGRLLAPKTGMIAMTMNSVLRGIERPVTLVPVYLGYDHVMEVATYHKELSGKKKKKESVWQVFGAIRKLGNFGQGYVNFGEPITLQNFLNERAPNWRTELADDPEQKPSWLTPAVNVLANRVMTNINDAAAASSVTLTSLVLLATDQNALERSLLERQLDLYLTLLKKVPYTTYTSVAEGDGKHLVQQGLELNKFVVCADPLGEIVSIEASQAVSMTYYRNNIIHLFIVPSLIASCLTHNEQIPRQQVVSIVADFYPLLKAELFMGIKDVPAYVNQVLDFFIEQGLVVETDTLTVVPEHTSQLLLLASSVSETLQRYAIIFNLLANRPKMERSELESESHLLAQRLGALHGITAPEFYDKKLYGTLSVKLKELGYLADNQDKSNINRIRDQANSLLRPSVKQTIVASVTAEHTV.

Residues 308–313 (CHRSHM) carry the HXXXXD motif motif.

This sequence belongs to the GPAT/DAPAT family.

It localises to the cell inner membrane. The catalysed reaction is sn-glycerol 3-phosphate + an acyl-CoA = a 1-acyl-sn-glycero-3-phosphate + CoA. Its pathway is phospholipid metabolism; CDP-diacylglycerol biosynthesis; CDP-diacylglycerol from sn-glycerol 3-phosphate: step 1/3. This Shewanella baltica (strain OS195) protein is Glycerol-3-phosphate acyltransferase.